The chain runs to 184 residues: UPF0398 protein BCG9842_B3730 (184 aa).

Belongs to the UPF0398 family.

In Bacillus cereus (strain G9842), this protein is UPF0398 protein BCG9842_B3730.